The primary structure comprises 127 residues: Fluoride-specific ion channel FluC (127 aa).

The next 4 helical transmembrane spans lie at 1 to 21 (MPQG…GACL), 39 to 59 (FGTL…YGVI), 72 to 92 (LIGV…VETL), and 105 to 125 (ANVF…IELM). G79 and T82 together coordinate Na(+).

It belongs to the fluoride channel Fluc/FEX (TC 1.A.43) family.

It localises to the cell inner membrane. The enzyme catalyses fluoride(in) = fluoride(out). Its activity is regulated as follows. Na(+) is not transported, but it plays an essential structural role and its presence is essential for fluoride channel function. Functionally, fluoride-specific ion channel. Important for reducing fluoride concentration in the cell, thus reducing its toxicity. This chain is Fluoride-specific ion channel FluC, found in Alteromonas mediterranea (strain DSM 17117 / CIP 110805 / LMG 28347 / Deep ecotype).